A 188-amino-acid chain; its full sequence is Elongation factor P (188 aa).

It belongs to the elongation factor P family.

It localises to the cytoplasm. It functions in the pathway protein biosynthesis; polypeptide chain elongation. Functionally, involved in peptide bond synthesis. Stimulates efficient translation and peptide-bond synthesis on native or reconstituted 70S ribosomes in vitro. Probably functions indirectly by altering the affinity of the ribosome for aminoacyl-tRNA, thus increasing their reactivity as acceptors for peptidyl transferase. This chain is Elongation factor P (efp), found in Rickettsia conorii (strain ATCC VR-613 / Malish 7).